The sequence spans 219 residues: 7-cyano-7-deazaguanine synthase (219 aa).

10-20 (FSGGQDSTTCL) serves as a coordination point for ATP. The Zn(2+) site is built by cysteine 188, cysteine 197, cysteine 200, and cysteine 203.

Belongs to the QueC family. As to quaternary structure, homodimer. It depends on Zn(2+) as a cofactor.

It carries out the reaction 7-carboxy-7-deazaguanine + NH4(+) + ATP = 7-cyano-7-deazaguanine + ADP + phosphate + H2O + H(+). Its pathway is purine metabolism; 7-cyano-7-deazaguanine biosynthesis. In terms of biological role, catalyzes the ATP-dependent conversion of 7-carboxy-7-deazaguanine (CDG) to 7-cyano-7-deazaguanine (preQ(0)). In Clostridium botulinum (strain 657 / Type Ba4), this protein is 7-cyano-7-deazaguanine synthase.